A 194-amino-acid chain; its full sequence is Adenylate kinase (194 aa).

10 to 15 (GAGKGT) is a binding site for ATP. An NMP region spans residues 30–59 (STGDMLRAAVKAETEIGKKAKAVMDAGELV). AMP contacts are provided by residues T31, R36, 57–59 (ELV), 85–88 (GYPR), and Q92. An LID region spans residues 126-142 (KRAEDAQAAGQPVRRDD). R127 serves as a coordination point for ATP. AMP contacts are provided by R139 and R150. A178 provides a ligand contact to ATP.

It belongs to the adenylate kinase family. In terms of assembly, monomer.

Its subcellular location is the cytoplasm. The catalysed reaction is AMP + ATP = 2 ADP. The protein operates within purine metabolism; AMP biosynthesis via salvage pathway; AMP from ADP: step 1/1. Catalyzes the reversible transfer of the terminal phosphate group between ATP and AMP. Plays an important role in cellular energy homeostasis and in adenine nucleotide metabolism. This Chelativorans sp. (strain BNC1) protein is Adenylate kinase.